Here is a 488-residue protein sequence, read N- to C-terminus: 3-octaprenyl-4-hydroxybenzoate carboxy-lyase (488 aa).

Asparagine 172 contributes to the Mn(2+) binding site. Residues 175-177 (IYR), 189-191 (RWL), and 194-195 (RG) each bind prenylated FMN. Glutamate 238 provides a ligand contact to Mn(2+). Aspartate 287 serves as the catalytic Proton donor.

It belongs to the UbiD family. As to quaternary structure, homohexamer. Prenylated FMN is required as a cofactor. The cofactor is Mn(2+).

It localises to the cell membrane. The catalysed reaction is a 4-hydroxy-3-(all-trans-polyprenyl)benzoate + H(+) = a 2-(all-trans-polyprenyl)phenol + CO2. The protein operates within cofactor biosynthesis; ubiquinone biosynthesis. Catalyzes the decarboxylation of 3-octaprenyl-4-hydroxy benzoate to 2-octaprenylphenol, an intermediate step in ubiquinone biosynthesis. The protein is 3-octaprenyl-4-hydroxybenzoate carboxy-lyase of Ectopseudomonas mendocina (strain ymp) (Pseudomonas mendocina).